A 362-amino-acid polypeptide reads, in one-letter code: GTP 3',8-cyclase (362 aa).

The Radical SAM core domain maps to 8–228 (SLGRPLRDLR…ARISSHWPID (221 aa)). A GTP-binding site is contributed by R17. Residues C24 and C28 each contribute to the [4Fe-4S] cluster site. S-adenosyl-L-methionine is bound at residue Y30. A [4Fe-4S] cluster-binding site is contributed by C31. Residue R71 coordinates GTP. G75 contacts S-adenosyl-L-methionine. GTP is bound at residue T102. S126 lines the S-adenosyl-L-methionine pocket. K164 lines the GTP pocket. M198 lines the S-adenosyl-L-methionine pocket. 2 residues coordinate [4Fe-4S] cluster: C262 and C265. Position 267–269 (267–269 (RLR)) interacts with GTP. C279 is a [4Fe-4S] cluster binding site. Residues 325–362 (ALDSDGSREDADESEASAVPGRSTHPGHRKVEMSYIGG) form a disordered region.

It belongs to the radical SAM superfamily. MoaA family. As to quaternary structure, monomer and homodimer. It depends on [4Fe-4S] cluster as a cofactor.

It carries out the reaction GTP + AH2 + S-adenosyl-L-methionine = (8S)-3',8-cyclo-7,8-dihydroguanosine 5'-triphosphate + 5'-deoxyadenosine + L-methionine + A + H(+). It functions in the pathway cofactor biosynthesis; molybdopterin biosynthesis. Its function is as follows. Catalyzes the cyclization of GTP to (8S)-3',8-cyclo-7,8-dihydroguanosine 5'-triphosphate. The protein is GTP 3',8-cyclase of Acidothermus cellulolyticus (strain ATCC 43068 / DSM 8971 / 11B).